A 540-amino-acid polypeptide reads, in one-letter code: Chaperonin GroEL 2 (540 aa).

ATP contacts are provided by residues 29–32 (TMGP), Lys-50, 86–90 (DGTTT), Gly-414, and Asp-496.

Belongs to the chaperonin (HSP60) family. As to quaternary structure, forms a cylinder of 14 subunits composed of two heptameric rings stacked back-to-back. Interacts with the co-chaperonin GroES.

It localises to the cytoplasm. It catalyses the reaction ATP + H2O + a folded polypeptide = ADP + phosphate + an unfolded polypeptide.. Together with its co-chaperonin GroES, plays an essential role in assisting protein folding. The GroEL-GroES system forms a nano-cage that allows encapsulation of the non-native substrate proteins and provides a physical environment optimized to promote and accelerate protein folding. The protein is Chaperonin GroEL 2 of Rhodopirellula baltica (strain DSM 10527 / NCIMB 13988 / SH1).